The following is an 812-amino-acid chain: Outer membrane usher protein FaeD (812 aa).

Residues 1-35 form the signal peptide; sequence MKKYVTTKSVQPVAFRLTTLSLVMSAVLGSASVIA. A disulfide bridge links Cys793 with Cys811.

It belongs to the fimbrial export usher family.

Its subcellular location is the cell outer membrane. In terms of biological role, involved in the export and assembly of K88ab fimbrial subunits across the outer membrane. This is Outer membrane usher protein FaeD (faeD) from Escherichia coli.